Consider the following 697-residue polypeptide: tRNA 5-methylaminomethyl-2-thiouridine biosynthesis bifunctional protein MnmC (697 aa).

The tRNA (mnm(5)s(2)U34)-methyltransferase stretch occupies residues 1–275 (MTAKPHKSCQ…KPATLAAIDH (275 aa)). Residues 280 to 697 (VGGGLASANL…LRKLLKGKAL (418 aa)) form an FAD-dependent cmnm(5)s(2)U34 oxidoreductase region.

In the N-terminal section; belongs to the methyltransferase superfamily. tRNA (mnm(5)s(2)U34)-methyltransferase family. It in the C-terminal section; belongs to the DAO family. Requires FAD as cofactor.

The protein resides in the cytoplasm. It catalyses the reaction 5-aminomethyl-2-thiouridine(34) in tRNA + S-adenosyl-L-methionine = 5-methylaminomethyl-2-thiouridine(34) in tRNA + S-adenosyl-L-homocysteine + H(+). In terms of biological role, catalyzes the last two steps in the biosynthesis of 5-methylaminomethyl-2-thiouridine (mnm(5)s(2)U) at the wobble position (U34) in tRNA. Catalyzes the FAD-dependent demodification of cmnm(5)s(2)U34 to nm(5)s(2)U34, followed by the transfer of a methyl group from S-adenosyl-L-methionine to nm(5)s(2)U34, to form mnm(5)s(2)U34. In Shewanella sp. (strain ANA-3), this protein is tRNA 5-methylaminomethyl-2-thiouridine biosynthesis bifunctional protein MnmC.